Consider the following 365-residue polypeptide: Histidinol-phosphate aminotransferase (365 aa).

An N6-(pyridoxal phosphate)lysine modification is found at Lys-220.

It belongs to the class-II pyridoxal-phosphate-dependent aminotransferase family. Histidinol-phosphate aminotransferase subfamily. Homodimer. Pyridoxal 5'-phosphate is required as a cofactor.

It carries out the reaction L-histidinol phosphate + 2-oxoglutarate = 3-(imidazol-4-yl)-2-oxopropyl phosphate + L-glutamate. It functions in the pathway amino-acid biosynthesis; L-histidine biosynthesis; L-histidine from 5-phospho-alpha-D-ribose 1-diphosphate: step 7/9. The sequence is that of Histidinol-phosphate aminotransferase from Neisseria meningitidis serogroup A / serotype 4A (strain DSM 15465 / Z2491).